The primary structure comprises 102 residues: Small ribosomal subunit protein uS10 (102 aa).

Belongs to the universal ribosomal protein uS10 family. Part of the 30S ribosomal subunit.

In terms of biological role, involved in the binding of tRNA to the ribosomes. The chain is Small ribosomal subunit protein uS10 from Treponema pallidum (strain Nichols).